The primary structure comprises 92 residues: Acyl carrier protein AcpXL (92 aa).

A Carrier domain is found at 2-88 (TATFDKVADI…NLCAKIDELK (87 aa)). At Ser37 the chain carries O-(pantetheine 4'-phosphoryl)serine.

In terms of processing, 4'-phosphopantetheine is transferred from CoA to a specific serine of apo-ACP by AcpS. This modification is essential for activity because fatty acids are bound in thioester linkage to the sulfhydryl of the prosthetic group.

The protein localises to the cytoplasm. It participates in glycolipid biosynthesis; KDO(2)-lipid A biosynthesis. Carrier of the growing fatty acid chain in fatty acid biosynthesis. Is involved in the transfer of long hydroxylated fatty acids to lipid A. Is acylated predominantly with 27-hydroxyoctacosanoic acid. This chain is Acyl carrier protein AcpXL (acpXL), found in Rhizobium etli (strain ATCC 51251 / DSM 11541 / JCM 21823 / NBRC 15573 / CFN 42).